Here is a 1125-residue protein sequence, read N- to C-terminus: tRNA (34-2'-O)-methyltransferase regulator WDR6 (1125 aa).

N-acetylmethionine is present on Met1. WD repeat units follow at residues 89–130 (SKGL…GNVA), 155–197 (TDRC…PDNK), 207–246 (GHVG…VPGG), 256–294 (GHSA…QAFR), 295–335 (GHQG…YPGL), 346–384 (SRPG…WEQL), 433–475 (LFQG…TGKA), 489–528 (SKQR…FKKP), 567–605 (HGKQ…QPVL), 611–650 (RGMN…KLHI), 652–692 (NCGG…IRPN), 725–765 (EHPD…GAAH), 767–798 (LTAV…HPGL), 860–905 (TRYM…RILH), 912–958 (HHKR…DRGS), 982–1024 (AHSC…PELE), and 1047–1085 (AHAA…PTFM).

Belongs to the WD repeat WDR6 family. In terms of assembly, interacts with FTSJ1; the interaction is direct, and required for 2'-O-methylation of position 34 in substrate tRNAs. Interacts with IRS4. Interacts with STK11/LKB1. Expressed in hypothalamus, hippocampus, cerebrum cortex and cerebellum.

The protein resides in the cytoplasm. In terms of biological role, together with methyltransferase FTSJ1, methylates the 2'-O-ribose of nucleotides at position 34 of the tRNA anticodon loop of substrate tRNAs. Required for the correct positioning of the substrate tRNA for methylation. Required to suppress amino acid starvation-induced autophagy. Enhances the STK11/LKB1-induced cell growth suppression activity. This is tRNA (34-2'-O)-methyltransferase regulator WDR6 (Wdr6) from Rattus norvegicus (Rat).